Reading from the N-terminus, the 1090-residue chain is UPF0507 protein SCY_4172 (1090 aa).

The region spanning 289–436 (FSVNQLLTDF…FEDFNKNTGN (148 aa)) is the VPS9 domain.

It belongs to the UPF0507 family.

The polypeptide is UPF0507 protein SCY_4172 (Saccharomyces cerevisiae (strain YJM789) (Baker's yeast)).